The chain runs to 299 residues: Myozenin-1 (299 aa).

The disordered stretch occupies residues 1–34; that stretch reads MPLSGTPAPNKKRKSSKLIMELTGGGQESSGLNL. Residue Ser82 is modified to Phosphoserine. The disordered stretch occupies residues 102–174; that stretch reads GQGFSYSKSN…TGSGDQAGGE (73 aa). Composition is skewed to gly residues over residues 112-125 and 137-173; these read GRGG…GSAG and SGSG…QAGG.

This sequence belongs to the myozenin family. Interacts with ACTN2, ACTN3, FLNA, FLNB, FLNC, LDB3, PPP3CA and TCAP. Interacts via its C-terminal region with MYOT. Expressed primarily in skeletal muscle. Detected at lower levels in heart, prostate and pancreas.

It localises to the nucleus. Its subcellular location is the cell projection. It is found in the pseudopodium. In terms of biological role, myozenins may serve as intracellular binding proteins involved in linking Z-disk proteins such as alpha-actinin, gamma-filamin, TCAP/telethonin, LDB3/ZASP and localizing calcineurin signaling to the sarcomere. Plays an important role in the modulation of calcineurin signaling. May play a role in myofibrillogenesis. This Homo sapiens (Human) protein is Myozenin-1.